Consider the following 217-residue polypeptide: U exon protein (217 aa).

Disordered stretches follow at residues 79–113 (ISGE…GGRV) and 171–217 (KEAP…WQRR). The span at 188 to 197 (RGQRGRKRRC) shows a compositional bias: basic residues. The span at 202 to 217 (GGFQQPTGANQAWQRR) shows a compositional bias: polar residues.

Belongs to the adenoviridae U exon protein family.

Its subcellular location is the host nucleus. It localises to the host nucleoplasm. The protein localises to the host nucleolus. Functionally, might play a role in viral replication since it is associated with viral replication centers. Seems to have an effect on DBP localization. In Human adenovirus C serotype 5 (HAdV-5), this protein is U exon protein.